The sequence spans 694 residues: DNA primase (694 aa).

The segment at 41–65 (CPFHDDKSPSFTVSPAKQFYYCFSC) adopts a CHC2-type zinc-finger fold. Residues 265–348 (DQAVVVEGYF…QGQVQLRVLN (84 aa)) enclose the Toprim domain. The Mg(2+) site is built by glutamate 271, aspartate 317, and aspartate 319.

It belongs to the DnaG primase family. As to quaternary structure, monomer. Interacts with DnaB. Requires Zn(2+) as cofactor. Mg(2+) is required as a cofactor.

It carries out the reaction ssDNA + n NTP = ssDNA/pppN(pN)n-1 hybrid + (n-1) diphosphate.. In terms of biological role, RNA polymerase that catalyzes the synthesis of short RNA molecules used as primers for DNA polymerase during DNA replication. This Synechococcus elongatus (strain ATCC 33912 / PCC 7942 / FACHB-805) (Anacystis nidulans R2) protein is DNA primase.